Here is a 169-residue protein sequence, read N- to C-terminus: MPLLDSFTVDHTRMIAPAVRVAKRMKTPCGDDITVFDLRFCKPNEERMPSKGIHTLEHLFAGFMREHLNSKKVEIIDISPMGCRTGFYMSLLGTPKPKRVAKAWAASMKDVLNVKSQKDIPELNVYQCGSYKMHSLKEAKEIAQNVLDRGIGIMNNKKLKLSKKLLKGL.

Fe cation is bound by residues histidine 54, histidine 58, and cysteine 128.

Belongs to the LuxS family. Homodimer. Requires Fe cation as cofactor.

It carries out the reaction S-(5-deoxy-D-ribos-5-yl)-L-homocysteine = (S)-4,5-dihydroxypentane-2,3-dione + L-homocysteine. Involved in the synthesis of autoinducer 2 (AI-2) which is secreted by bacteria and is used to communicate both the cell density and the metabolic potential of the environment. The regulation of gene expression in response to changes in cell density is called quorum sensing. Catalyzes the transformation of S-ribosylhomocysteine (RHC) to homocysteine (HC) and 4,5-dihydroxy-2,3-pentadione (DPD). The chain is S-ribosylhomocysteine lyase from Sulfurovum sp. (strain NBC37-1).